The primary structure comprises 260 residues: Membrane protein insertase YidC 1 (260 aa).

An N-terminal signal peptide occupies residues 1 to 22; the sequence is MLKSYRAVLVSLSLLFVFVLSG. A lipid anchor (N-palmitoyl cysteine) is attached at Cys-23. Residue Cys-23 is the site of S-diacylglycerol cysteine attachment. The next 5 helical transmembrane spans lie at 29–49, 52–72, 133–153, 164–184, and 213–233; these read IDAHSTGIWDHYFVYPISFMI, VAHHIPGASFGIAIIIMTLVI, LAGCWPLLIQMPIFSALYYAI, FLWVNLGHADPYHILPIIAAL, and MPAMILFMGFAAPSGLVLYWI.

It belongs to the OXA1/ALB3/YidC family. Type 2 subfamily.

The protein resides in the cell membrane. Its function is as follows. Required for the insertion and/or proper folding and/or complex formation of integral membrane proteins into the membrane. Involved in integration of membrane proteins that insert both dependently and independently of the Sec translocase complex, as well as at least some lipoproteins. The chain is Membrane protein insertase YidC 1 from Bacillus cereus (strain ATCC 14579 / DSM 31 / CCUG 7414 / JCM 2152 / NBRC 15305 / NCIMB 9373 / NCTC 2599 / NRRL B-3711).